Reading from the N-terminus, the 152-residue chain is Deoxyuridine 5'-triphosphate nucleotidohydrolase (152 aa).

Residues 72 to 74, Asn85, and 89 to 91 each bind substrate; these read RSG and TID.

The protein belongs to the dUTPase family. Requires Mg(2+) as cofactor.

It carries out the reaction dUTP + H2O = dUMP + diphosphate + H(+). Its pathway is pyrimidine metabolism; dUMP biosynthesis; dUMP from dCTP (dUTP route): step 2/2. In terms of biological role, this enzyme is involved in nucleotide metabolism: it produces dUMP, the immediate precursor of thymidine nucleotides and it decreases the intracellular concentration of dUTP so that uracil cannot be incorporated into DNA. The protein is Deoxyuridine 5'-triphosphate nucleotidohydrolase of Bradyrhizobium sp. (strain ORS 278).